Consider the following 176-residue polypeptide: MDLPGPIHDFLLVFLELGLILGSLGVVFLPNPIYSAFSLGLVLFCISLFYILLNSYFVAAAQLLIYVGAINVLIIFAVMFMNGSEYYKDFYLWTVGDGVTSMVCTSLFISLITTIPDTSWYGIIWTTKSNQIIEKDLISNSQQIGIHLVTDFFLPFELISIILLVALIGAIAIARQ.

Helical transmembrane passes span 10–30 (FLLV…VFLP), 33–53 (IYSA…YILL), 61–81 (AQLL…VMFM), 92–112 (LWTV…ISLI), and 153–173 (FLPF…AIAI).

Belongs to the complex I subunit 6 family. NDH is composed of at least 16 different subunits, 5 of which are encoded in the nucleus.

It localises to the plastid. It is found in the chloroplast thylakoid membrane. The enzyme catalyses a plastoquinone + NADH + (n+1) H(+)(in) = a plastoquinol + NAD(+) + n H(+)(out). It catalyses the reaction a plastoquinone + NADPH + (n+1) H(+)(in) = a plastoquinol + NADP(+) + n H(+)(out). NDH shuttles electrons from NAD(P)H:plastoquinone, via FMN and iron-sulfur (Fe-S) centers, to quinones in the photosynthetic chain and possibly in a chloroplast respiratory chain. The immediate electron acceptor for the enzyme in this species is believed to be plastoquinone. Couples the redox reaction to proton translocation, and thus conserves the redox energy in a proton gradient. This chain is NAD(P)H-quinone oxidoreductase subunit 6, chloroplastic (ndhG), found in Jasminum nudiflorum (Winter jasmine).